Here is a 296-residue protein sequence, read N- to C-terminus: MFS-type transporter pytF (296 aa).

Transmembrane regions (helical) follow at residues 30–50 (WLVV…LNSF), 72–92 (WIGS…GPVF), 98–118 (KVLF…VSLC), 124–144 (FILA…YPTI), 157–177 (LAMG…PLIL), 180–200 (LFAV…SFAL), and 238–258 (VVGM…IPLF). The N-linked (GlcNAc...) asparagine glycan is linked to Asn-265. A helical membrane pass occupies residues 271–291 (SLISILNAGSFVGRIVSGALA).

This sequence belongs to the major facilitator superfamily. Monocarboxylate porter (TC 2.A.1.13) family.

It localises to the cell membrane. In terms of biological role, MFS-type transporter; part of the gene cluster that mediates the biosynthesis of pyranterreones, a family of antioxidative compounds. Directly involved in the secretion of pyranterreones. In Aspergillus terreus (strain NIH 2624 / FGSC A1156), this protein is MFS-type transporter pytF.